The chain runs to 708 residues: Leukotoxin translocation ATP-binding protein LktB (708 aa).

The region spanning Met-1–Val-126 is the Peptidase C39 domain. The ABC transmembrane type-1 domain maps to Phe-155–Gln-437. 5 consecutive transmembrane segments (helical) span residues Leu-159–Val-179, Leu-192–Leu-212, Ala-270–Tyr-290, Leu-296–Leu-316, and Val-389–Gly-409. An ABC transporter domain is found at Ile-469–Gln-704. Residue Gly-503 to Ser-510 participates in ATP binding.

The protein belongs to the ABC transporter superfamily. Protein-1 exporter (TC 3.A.1.109) family. In terms of assembly, homodimer.

The protein resides in the cell inner membrane. The catalysed reaction is ATP + H2O + proteinSide 1 = ADP + phosphate + proteinSide 2.. Its function is as follows. Part of the ABC transporter complex LktBD involved in leukotoxin export. Transmembrane domains (TMD) form a pore in the inner membrane and the ATP-binding domain (NBD) is responsible for energy generation. This Mannheimia haemolytica (Pasteurella haemolytica) protein is Leukotoxin translocation ATP-binding protein LktB (lktB).